Reading from the N-terminus, the 478-residue chain is Protein nucleotidyltransferase YdiU (478 aa).

Positions 84, 86, 87, 107, 119, 120, 170, and 177 each coordinate ATP. Asp246 acts as the Proton acceptor in catalysis. Mg(2+) contacts are provided by Asn247 and Asp256. Asp256 is a binding site for ATP.

It belongs to the SELO family. It depends on Mg(2+) as a cofactor. The cofactor is Mn(2+).

The enzyme catalyses L-seryl-[protein] + ATP = 3-O-(5'-adenylyl)-L-seryl-[protein] + diphosphate. The catalysed reaction is L-threonyl-[protein] + ATP = 3-O-(5'-adenylyl)-L-threonyl-[protein] + diphosphate. It catalyses the reaction L-tyrosyl-[protein] + ATP = O-(5'-adenylyl)-L-tyrosyl-[protein] + diphosphate. It carries out the reaction L-histidyl-[protein] + UTP = N(tele)-(5'-uridylyl)-L-histidyl-[protein] + diphosphate. The enzyme catalyses L-seryl-[protein] + UTP = O-(5'-uridylyl)-L-seryl-[protein] + diphosphate. The catalysed reaction is L-tyrosyl-[protein] + UTP = O-(5'-uridylyl)-L-tyrosyl-[protein] + diphosphate. Nucleotidyltransferase involved in the post-translational modification of proteins. It can catalyze the addition of adenosine monophosphate (AMP) or uridine monophosphate (UMP) to a protein, resulting in modifications known as AMPylation and UMPylation. The sequence is that of Protein nucleotidyltransferase YdiU from Escherichia coli (strain K12 / MC4100 / BW2952).